The chain runs to 186 residues: ADP-ribosylation factor-like protein DDB_G0292332 (186 aa).

Residues 24 to 31, 78 to 82, and 138 to 141 each bind GTP; these read GVENVGKT, DIGGK, and NKQD.

Belongs to the small GTPase superfamily. Arf family.

Its function is as follows. Binds and exchanges GTP and GDP. The polypeptide is ADP-ribosylation factor-like protein DDB_G0292332 (Dictyostelium discoideum (Social amoeba)).